The following is a 706-amino-acid chain: Lysophospholipase 2 (706 aa).

The N-terminal stretch at 1–19 (MQLRNILQASSLISGLSLA) is a signal peptide. The 553-residue stretch at 36 to 588 (PCPSDDTSLV…ADYCWNGTLS (553 aa)) folds into the PLA2c domain. N-linked (GlcNAc...) asparagine glycosylation is found at asparagine 47, asparagine 80, asparagine 94, asparagine 125, asparagine 162, asparagine 181, asparagine 193, asparagine 217, asparagine 279, asparagine 309, asparagine 365, asparagine 390, asparagine 491, asparagine 515, asparagine 524, asparagine 543, asparagine 567, asparagine 584, asparagine 598, asparagine 630, asparagine 634, asparagine 642, asparagine 648, asparagine 652, and asparagine 658. Residues 627-672 (TSGNTTSNSTTSTSSNVTSNSNSSSNTTLNSNSSSSSISSSTARSS) are disordered. Residue asparagine 680 is the site of GPI-anchor amidated asparagine attachment. Positions 681 to 706 (AAAISYANTNTLMSLLGAITALFGLI) are cleaved as a propeptide — removed in mature form.

The protein belongs to the lysophospholipase family. The GPI-anchor is attached to the protein in the endoplasmic reticulum and serves to target the protein to the cell surface. There, the glucosamine-inositol phospholipid moiety is cleaved off and the GPI-modified mannoprotein is covalently attached via its lipidless GPI glycan remnant to the 1,6-beta-glucan of the outer cell wall layer.

Its subcellular location is the secreted. It localises to the cell wall. The protein localises to the membrane. It carries out the reaction a 1-acyl-sn-glycero-3-phosphocholine + H2O = sn-glycerol 3-phosphocholine + a fatty acid + H(+). The enzyme catalyses 1-hexadecanoyl-sn-glycero-3-phosphoethanolamine + H2O = sn-glycero-3-phosphoethanolamine + hexadecanoate + H(+). The catalysed reaction is 1-hexadecanoyl-sn-glycero-3-phosphocholine + H2O = sn-glycerol 3-phosphocholine + hexadecanoate + H(+). It catalyses the reaction 1-hexadecanoyl-sn-glycero-3-phospho-L-serine + H2O = sn-glycero-3-phospho-L-serine + hexadecanoate + H(+). It carries out the reaction 1,2-dihexadecanoyl-sn-glycero-3-phosphocholine + H2O = 1-hexadecanoyl-sn-glycero-3-phosphocholine + hexadecanoate + H(+). Its function is as follows. Sequentially removes both fatty acyl groups from diacylglycerophospholipids and therefore has both phospholipase A and lysophospholipase activities. However, it does not display transacylase activity. Substrate preference is phosphatidylserine &gt; phosphatidylinositol &gt; phosphatidylcholine &gt; phosphatidylethanolamine. The substrate specificity is pH- and ion-dependent. In contrast with activities observed at optimum pH 3.5, the order of substrate preference at pH 5.5 is phosphatidylserine = phosphatidylethanolamine &gt; phosphatidylcholine &gt; phosphatidylinositol. This is Lysophospholipase 2 (PLB2) from Saccharomyces cerevisiae (strain ATCC 204508 / S288c) (Baker's yeast).